The sequence spans 952 residues: MPDQTPAPSVLRFVDRHIGPDDQAVETLLNTIGVPSLDELAAKALPDVILDRLSTDGVAPGLEHLPAAATEHEALAELRALAQSNTVAVSMIGQGYYDTLTPPVLRRNIIENPAWYTAYTPYQPEISQGRLEALLNFQTMVTDLTGLEVANASMLDEGTAAAEAMTLMHRAVRGPATRLAVDADVYPQTAAILATRAEPLGIEIVTADLRQGLPDGDFFGVIVQLPGASGVVHDWSALVEQAHERGALVAVGADLLAATMITPPGEIGADVAFGTTQRFGVPMGFGGPHAGYLAVHSKHARQLPGRLVGVSVDADGSRAYRLALQTREQHIRRDKATSNICTAQVLLAVLAAMYASYHGPDGLRGIAQRVHGHARALAAGLADAGVEVVHDSFFDTVLAHVPGRADEVRAAAKERGINVWAVDADHVSVACDEATTAEHVADVLAAFGAAPSGADFAGPAVATRTSEFLTHPAFSDYRTETSMMRYLRSLADKDIALDRSMIPLGSCTMKLNAAAEMEAITWAEFGRQHPFAPASDTPGLRRLIADLQSWLTGITGYDEISLQPNAGSQGEYAGLLAIQAYHHARGDSGRTVCLIPSSAHGTNAASAAMVGMKVVVVACRANGDVDLDDLRAKVTEHADRLSALMITYPSTHGVYEHDIADICAAVHDAGGQVYVDGANLNALVGLARPGRFGGDVSHLNLHKTFCIPHGGGGPGVGPVAVRAHLAPYLPGHPLAAELSDDHTVSAAPYGSASILPITWAYIRMMGAAGLRSATLVAIASANYIARRLDEYYPVLYTGENGMVAHECILDLRGITKATGVTVDDVAKRLADYGFHAPTMSFPVAGTLMVEPTESESLSEIDAFCDAMIAIRAEIDRVGSGEWPVDDNPLRGAPHTAESLLVEEWTHPYTREQAAYPLGKGFRPKVWPPVRRIDGAYGDRNLVCSCPPVEAFA.

Residue lysine 703 is modified to N6-(pyridoxal phosphate)lysine.

It belongs to the GcvP family. As to quaternary structure, the glycine cleavage system is composed of four proteins: P, T, L and H. Requires pyridoxal 5'-phosphate as cofactor.

It catalyses the reaction N(6)-[(R)-lipoyl]-L-lysyl-[glycine-cleavage complex H protein] + glycine + H(+) = N(6)-[(R)-S(8)-aminomethyldihydrolipoyl]-L-lysyl-[glycine-cleavage complex H protein] + CO2. Its function is as follows. The glycine cleavage system catalyzes the degradation of glycine. The P protein binds the alpha-amino group of glycine through its pyridoxal phosphate cofactor; CO(2) is released and the remaining methylamine moiety is then transferred to the lipoamide cofactor of the H protein. This chain is Glycine dehydrogenase (decarboxylating), found in Mycolicibacterium gilvum (strain PYR-GCK) (Mycobacterium gilvum (strain PYR-GCK)).